Consider the following 146-residue polypeptide: Large ribosomal subunit protein uL15 (146 aa).

The disordered stretch occupies residues 1 to 65; that stretch reads MSDIQLNTLK…GQMPLQRRLP (65 aa). Residues 24-34 are compositionally biased toward gly residues; that stretch reads RGIGSGLGKTA.

It belongs to the universal ribosomal protein uL15 family. In terms of assembly, part of the 50S ribosomal subunit.

In terms of biological role, binds to the 23S rRNA. This Bordetella parapertussis (strain 12822 / ATCC BAA-587 / NCTC 13253) protein is Large ribosomal subunit protein uL15.